The primary structure comprises 206 residues: uncharacterized protein (206 aa).

This is an uncharacterized protein from Citrus psorosis virus (isolate Spain/P-121) (CPsV).